A 43-amino-acid chain; its full sequence is Potassium channel toxin gamma-KTx 4.1 (43 aa).

Intrachain disulfides connect C5-C23, C11-C34, C20-C39, and C24-C41.

Belongs to the ergtoxin family. Gamma-KTx 4 subfamily. In terms of tissue distribution, expressed by the venom gland.

It localises to the secreted. Functionally, reversibly blocks Kv11/ERG potassium channels. The sequence is that of Potassium channel toxin gamma-KTx 4.1 from Centruroides limpidus (Mexican scorpion).